A 549-amino-acid polypeptide reads, in one-letter code: Glucose-6-phosphate isomerase (549 aa).

The Proton donor role is filled by Glu-353. Residues His-384 and Lys-513 contribute to the active site.

It belongs to the GPI family.

The protein resides in the cytoplasm. The enzyme catalyses alpha-D-glucose 6-phosphate = beta-D-fructose 6-phosphate. It functions in the pathway carbohydrate biosynthesis; gluconeogenesis. Its pathway is carbohydrate degradation; glycolysis; D-glyceraldehyde 3-phosphate and glycerone phosphate from D-glucose: step 2/4. In terms of biological role, catalyzes the reversible isomerization of glucose-6-phosphate to fructose-6-phosphate. This is Glucose-6-phosphate isomerase from Brucella abortus (strain S19).